The sequence spans 85 residues: MKTRGLKRQFEGTVVSDKMDKTVIVAVERLVKHQEYKKYVRRTAKFAAHDEQNQCAVGDKVIITESRPLSRTKHWRVVNVVEKAV.

Belongs to the universal ribosomal protein uS17 family. In terms of assembly, part of the 30S ribosomal subunit.

Functionally, one of the primary rRNA binding proteins, it binds specifically to the 5'-end of 16S ribosomal RNA. In Desulfosudis oleivorans (strain DSM 6200 / JCM 39069 / Hxd3) (Desulfococcus oleovorans), this protein is Small ribosomal subunit protein uS17.